A 429-amino-acid polypeptide reads, in one-letter code: TNFAIP3-interacting protein 2 (429 aa).

A Phosphoserine modification is found at Ser7. Residues 29-117 (QRLRRLQDQL…MQQLLSQPQH (89 aa)) are a coiled coil. Basic and acidic residues predominate over residues 177-195 (HAQRNVGERSPDQSEHTDG). The interval 177–199 (HAQRNVGERSPDQSEHTDGHTSV) is disordered. 2 coiled-coil regions span residues 196–226 (HTSV…LNAK) and 255–340 (ELMR…QVSW). Residues 289–347 (RDAALERVQMLEQQILAYKDDFMSERADRERAQSRIQELEEKVASLLHQVSWRQDSREP) form a ubiquitin-binding domain (UBD) region. The segment at 372–400 (PGGWRPGTGSQQPEPPAEGGHPGAAQRGQ) is disordered. Over residues 388-397 (AEGGHPGAAQ) the composition is skewed to low complexity. A CCHC NOA-type zinc finger spans residues 397-429 (QRGQGDLQCPHCLQCFSDEQGEELLRHVAECCQ). Residues Cys405, Cys408, His423, and Cys427 each coordinate Zn(2+).

In terms of assembly, interacts with STK11/LKB1, TNFAIP3, IKBKG, NFKB1, MAP3K8, TEK, RIPK1, CHUK, IKBKB and SMARCD1. Interacts with polyubiquitin. As to quaternary structure, (Microbial infection) Interacts with severe fever with thrombocytopenia syndrome virus (SFTSV) NSs; this interaction promotes TPL2 complex formation and signaling activity leading to IL-10 production. In vitro phosphorylated by CHUK. Post-translationally, ubiquitinated; undergoes 'Lys-48'-linked polyubiquitination probably leading to constitutive proteasomal degradation which can be impaired by IKK-A/CHUK or IKBKB probably involving deubiquitination. Deubiquitinated by USP35; leading to stabilization and inhibition of TNFalpha-induced NF-kappa-B activation. In terms of tissue distribution, ubiquitously expressed in all tissues examined.

The protein localises to the cytoplasm. It localises to the nucleus. In terms of biological role, inhibits NF-kappa-B activation by blocking the interaction of RIPK1 with its downstream effector NEMO/IKBKG. Forms a ternary complex with NFKB1 and MAP3K8 but appears to function upstream of MAP3K8 in the TLR4 signaling pathway that regulates MAP3K8 activation. Involved in activation of the MEK/ERK signaling pathway during innate immune response; this function seems to be stimulus- and cell type specific. Required for stability of MAP3K8. Involved in regulation of apoptosis in endothelial cells; promotes TEK agonist-stimulated endothelial survival. May act as transcriptional coactivator when translocated to the nucleus. Enhances CHUK-mediated NF-kappa-B activation involving NF-kappa-B p50-p65 and p50-c-Rel complexes. The polypeptide is TNFAIP3-interacting protein 2 (Homo sapiens (Human)).